Here is a 1364-residue protein sequence, read N- to C-terminus: Serine protease SepA autotransporter (1364 aa).

The first 56 residues, 1–56 (MNKIYYLKYCHITKSLIAVSELARRVTCKSHRRLSRRVILTSVAALSLSSAWPALS), serve as a signal peptide directing secretion. The Peptidase S6 domain maps to 57–307 (ATVSAEIPYQ…VVTTQDFLGQ (251 aa)). Catalysis depends on charge relay system residues histidine 134, aspartate 162, and serine 267. The 267-residue stretch at 1098–1364 (DTQGDAGVWA…AINANFRYVF (267 aa)) folds into the Autotransporter domain.

Post-translationally, cleaved to release the mature protein from the outer membrane. Cleavage is performed by an unknown protease.

It localises to the periplasm. It is found in the secreted. Its subcellular location is the cell surface. The protein localises to the cell outer membrane. Inhibited by the serine protease inhibitor PMSF, but not by benzamidine, alpha 1-antitrypsin, alpha 1-antichymotrypsin. Not inhibited by metalloprotease inhibitors such as EDTA and orthophenanthroline. In terms of biological role, major protein secreted in laboratory media showing proteolytic activity. May be involved in invasion and destruction of host intestinal epithelium. This chain is Serine protease SepA autotransporter (sepA), found in Shigella flexneri.